The primary structure comprises 380 residues: Cytochrome b (380 aa).

The next 4 membrane-spanning stretches (helical) occupy residues 33–53, 77–98, 113–133, and 178–198; these read FGSL…FLAM, WLIR…YLHV, WNIG…GYVL, and FFAF…IHLL. Positions 83 and 97 each coordinate heme b. 2 residues coordinate heme b: H182 and H196. An a ubiquinone-binding site is contributed by H201. The next 4 helical transmembrane spans lie at 226 to 246, 288 to 308, 320 to 340, and 347 to 367; these read YKDL…ALFS, LGGV…PMLH, PSQI…WIGG, and FVLI…IALP.

The protein belongs to the cytochrome b family. The cytochrome bc1 complex contains 3 respiratory subunits (MT-CYB, CYC1 and UQCRFS1), 2 core proteins (UQCRC1 and UQCRC2) and probably 6 low-molecular weight proteins. Requires heme b as cofactor.

The protein resides in the mitochondrion inner membrane. Its function is as follows. Component of the ubiquinol-cytochrome c reductase complex (complex III or cytochrome b-c1 complex) that is part of the mitochondrial respiratory chain. The b-c1 complex mediates electron transfer from ubiquinol to cytochrome c. Contributes to the generation of a proton gradient across the mitochondrial membrane that is then used for ATP synthesis. In Acipenser sinensis (Chinese sturgeon), this protein is Cytochrome b (mt-cyb).